We begin with the raw amino-acid sequence, 157 residues long: Ribosome maturation factor RimP (157 aa).

The protein belongs to the RimP family.

The protein resides in the cytoplasm. Functionally, required for maturation of 30S ribosomal subunits. The protein is Ribosome maturation factor RimP of Ligilactobacillus salivarius (strain UCC118) (Lactobacillus salivarius).